Reading from the N-terminus, the 345-residue chain is Methylthioribose-1-phosphate isomerase (345 aa).

Substrate contacts are provided by residues 47–49 (RGA), Arg90, and Gln197. The active-site Proton donor is the Asp238. 248–249 (NK) serves as a coordination point for substrate.

The protein belongs to the eIF-2B alpha/beta/delta subunits family. MtnA subfamily.

The catalysed reaction is 5-(methylsulfanyl)-alpha-D-ribose 1-phosphate = 5-(methylsulfanyl)-D-ribulose 1-phosphate. Its pathway is amino-acid biosynthesis; L-methionine biosynthesis via salvage pathway; L-methionine from S-methyl-5-thio-alpha-D-ribose 1-phosphate: step 1/6. Its function is as follows. Catalyzes the interconversion of methylthioribose-1-phosphate (MTR-1-P) into methylthioribulose-1-phosphate (MTRu-1-P). The sequence is that of Methylthioribose-1-phosphate isomerase from Caldanaerobacter subterraneus subsp. tengcongensis (strain DSM 15242 / JCM 11007 / NBRC 100824 / MB4) (Thermoanaerobacter tengcongensis).